Here is a 318-residue protein sequence, read N- to C-terminus: NADH-ubiquinone oxidoreductase chain 1 (318 aa).

A run of 8 helical transmembrane segments spans residues 2 to 22 (FMIN…FLTL), 68 to 88 (ISMF…MWTP), 100 to 120 (LGVL…LWSG), 146 to 166 (LAII…PTLI), 171 to 191 (HMWL…STLA), 222 to 242 (LFFL…TILF), 253 to 273 (ELYT…FLWV), and 293 to 313 (FLPL…ITAG).

Belongs to the complex I subunit 1 family. As to quaternary structure, core subunit of respiratory chain NADH dehydrogenase (Complex I) which is composed of 45 different subunits.

It is found in the mitochondrion inner membrane. It carries out the reaction a ubiquinone + NADH + 5 H(+)(in) = a ubiquinol + NAD(+) + 4 H(+)(out). In terms of biological role, core subunit of the mitochondrial membrane respiratory chain NADH dehydrogenase (Complex I) which catalyzes electron transfer from NADH through the respiratory chain, using ubiquinone as an electron acceptor. Essential for the catalytic activity and assembly of complex I. In Hipposideros diadema (Diadem leaf-nosed bat), this protein is NADH-ubiquinone oxidoreductase chain 1 (MT-ND1).